A 101-amino-acid polypeptide reads, in one-letter code: NAD(P)H-quinone oxidoreductase subunit 4L, chloroplastic (101 aa).

Helical transmembrane passes span 2–22 (MLEH…YGLI), 32–52 (MCLE…SDFF), and 61–81 (IFSI…SAIV).

It belongs to the complex I subunit 4L family. In terms of assembly, NDH is composed of at least 16 different subunits, 5 of which are encoded in the nucleus.

It is found in the plastid. It localises to the chloroplast thylakoid membrane. It carries out the reaction a plastoquinone + NADH + (n+1) H(+)(in) = a plastoquinol + NAD(+) + n H(+)(out). The enzyme catalyses a plastoquinone + NADPH + (n+1) H(+)(in) = a plastoquinol + NADP(+) + n H(+)(out). Its function is as follows. NDH shuttles electrons from NAD(P)H:plastoquinone, via FMN and iron-sulfur (Fe-S) centers, to quinones in the photosynthetic chain and possibly in a chloroplast respiratory chain. The immediate electron acceptor for the enzyme in this species is believed to be plastoquinone. Couples the redox reaction to proton translocation, and thus conserves the redox energy in a proton gradient. In Gossypium barbadense (Sea Island cotton), this protein is NAD(P)H-quinone oxidoreductase subunit 4L, chloroplastic.